A 160-amino-acid polypeptide reads, in one-letter code: Thioredoxin-like protein 4A homolog (160 aa).

The disordered stretch occupies residues 132-160 (KFLKKKKKKKNKKKQKKKIKKIKKKIKNN). Over residues 133–160 (FLKKKKKKKNKKKQKKKIKKIKKKIKNN) the composition is skewed to basic residues.

This sequence belongs to the DIM1 family. As to quaternary structure, component of the precatalytic spliceosome (spliceosome B complex). Component of the U5 snRNP complex. Component of the U4/U6-U5 tri-snRNP complex.

Its subcellular location is the nucleus. Its function is as follows. Plays a role in pre-mRNA splicing as component of the U5 snRNP and U4/U6-U5 tri-snRNP complexes that are involved in spliceosome assembly, and as component of the precatalytic spliceosome (spliceosome B complex). The protein is Thioredoxin-like protein 4A homolog (txnl4a) of Dictyostelium discoideum (Social amoeba).